The sequence spans 176 residues: Ribosome rescue factor SmrB (176 aa).

The Smr domain occupies 97-172 (LDMHGMTQQE…GDGALLVLLS (76 aa)).

Belongs to the SmrB family. In terms of assembly, associates with collided ribosomes, but not with correctly translating polysomes.

Acts as a ribosome collision sensor. Detects stalled/collided disomes (pairs of ribosomes where the leading ribosome is stalled and a second ribosome has collided with it) and endonucleolytically cleaves mRNA at the 5' boundary of the stalled ribosome. Stalled/collided disomes form a new interface (primarily via the 30S subunits) that binds SmrB. Cleaved mRNA becomes available for tmRNA ligation, leading to ribosomal subunit dissociation and rescue of stalled ribosomes. This chain is Ribosome rescue factor SmrB, found in Vibrio vulnificus (strain CMCP6).